The sequence spans 379 residues: Alanine racemase (379 aa).

Catalysis depends on Lys40, which acts as the Proton acceptor; specific for D-alanine. Lys40 carries the post-translational modification N6-(pyridoxal phosphate)lysine. Arg138 is a binding site for substrate. Catalysis depends on Tyr267, which acts as the Proton acceptor; specific for L-alanine. Met315 lines the substrate pocket.

The protein belongs to the alanine racemase family. Pyridoxal 5'-phosphate is required as a cofactor.

The enzyme catalyses L-alanine = D-alanine. It functions in the pathway amino-acid biosynthesis; D-alanine biosynthesis; D-alanine from L-alanine: step 1/1. Catalyzes the interconversion of L-alanine and D-alanine. May also act on other amino acids. The sequence is that of Alanine racemase (alr) from Halothermothrix orenii (strain H 168 / OCM 544 / DSM 9562).